Here is a 139-residue protein sequence, read N- to C-terminus: Putative pre-16S rRNA nuclease (139 aa).

The protein belongs to the YqgF nuclease family.

The protein resides in the cytoplasm. Its function is as follows. Could be a nuclease involved in processing of the 5'-end of pre-16S rRNA. This is Putative pre-16S rRNA nuclease from Bacillus licheniformis (strain ATCC 14580 / DSM 13 / JCM 2505 / CCUG 7422 / NBRC 12200 / NCIMB 9375 / NCTC 10341 / NRRL NRS-1264 / Gibson 46).